The following is an 85-amino-acid chain: UPF0291 protein SPH_1589 (85 aa).

The disordered stretch occupies residues 62-85; the sequence is TPEKLRQVQREKGLHGRSLDDPNS.

This sequence belongs to the UPF0291 family.

It is found in the cytoplasm. The polypeptide is UPF0291 protein SPH_1589 (Streptococcus pneumoniae (strain Hungary19A-6)).